Consider the following 297-residue polypeptide: Manganese efflux system protein MneP (297 aa).

Helical transmembrane passes span 12–32 (VALI…FFGL), 43–63 (GIHS…IGIS), 85–105 (IVGI…ILSF), 111–131 (VPQY…EILY), 155–175 (GDIV…IGNS), and 177–197 (GWSY…YLIF).

The protein belongs to the cation diffusion facilitator (CDF) transporter (TC 2.A.4) family.

It localises to the cell membrane. In terms of biological role, primary efflux pump for manganese. May prevent manganese intoxication. The sequence is that of Manganese efflux system protein MneP from Bacillus subtilis (strain 168).